The following is a 259-amino-acid chain: uncharacterized protein (259 aa).

The protein belongs to the BtpA family.

This is an uncharacterized protein from Pyrococcus horikoshii (strain ATCC 700860 / DSM 12428 / JCM 9974 / NBRC 100139 / OT-3).